Consider the following 283-residue polypeptide: 4-diphosphocytidyl-2-C-methyl-D-erythritol kinase (283 aa).

Residue Lys-10 is part of the active site. ATP is bound at residue 99–109 (PMGGGLGGGSS). Asp-141 is an active-site residue.

This sequence belongs to the GHMP kinase family. IspE subfamily. As to quaternary structure, homodimer.

It carries out the reaction 4-CDP-2-C-methyl-D-erythritol + ATP = 4-CDP-2-C-methyl-D-erythritol 2-phosphate + ADP + H(+). Its pathway is isoprenoid biosynthesis; isopentenyl diphosphate biosynthesis via DXP pathway; isopentenyl diphosphate from 1-deoxy-D-xylulose 5-phosphate: step 3/6. Catalyzes the phosphorylation of the position 2 hydroxy group of 4-diphosphocytidyl-2C-methyl-D-erythritol. The protein is 4-diphosphocytidyl-2-C-methyl-D-erythritol kinase of Escherichia coli O127:H6 (strain E2348/69 / EPEC).